Reading from the N-terminus, the 1112-residue chain is Nucleoporin NIC96 (1112 aa).

Disordered stretches follow at residues 1–74 (MSLI…GTST), 101–136 (TTQP…QAAP), and 303–350 (RDSS…MSIL). Positions 12–29 (PSSTKASLFSSPTTSANP) are enriched in polar residues. The segment covering 39 to 74 (GGSSLFAPKTAGSTTTSTTQPTSTTGLGTSLFGTST) has biased composition (low complexity). Residues 101 to 118 (TTQPGLGASSLTTAATSN) show a composition bias toward polar residues. Positions 113–135 (TAATSNQQAQQQQQQRQQHQQAA) form a coiled coil. Low complexity-rich tracts occupy residues 119–135 (QQAQ…QQAA) and 310–319 (TTTAQPTATP). Residues 394 to 415 (FLREKQAKLAEKIREFNDARQR) adopt a coiled-coil conformation.

The protein belongs to the nucleoporin interacting component (NIC) family. As to quaternary structure, component of the nuclear pore complex (NPC). NPC constitutes the exclusive means of nucleocytoplasmic transport. NPCs allow the passive diffusion of ions and small molecules and the active, nuclear transport receptor-mediated bidirectional transport of macromolecules such as proteins, RNAs, ribonucleoparticles (RNPs), and ribosomal subunits across the nuclear envelope. Due to its 8-fold rotational symmetry, all subunits are present with 8 copies or multiples thereof. Part of a tetrameric NUP192-NUP170-NIC96-NUP53 or NUP188-NUP170-NIC96-NUP53 module.

It localises to the nucleus. It is found in the nuclear pore complex. The protein localises to the nucleus membrane. Functionally, functions as a component of the nuclear pore complex (NPC). NPC components, collectively referred to as nucleoporins (NUPs), can play the role of both NPC structural components and of docking or interaction partners for transiently associated nuclear transport factors. NIC96, which is localized to the core of the NPC and the distal ring of the nuclear basket, is required for de novo assembly of NPCs. This chain is Nucleoporin NIC96 (NIC96), found in Chaetomium thermophilum (strain DSM 1495 / CBS 144.50 / IMI 039719) (Thermochaetoides thermophila).